The primary structure comprises 397 residues: Lysophospholipid transporter LplT (397 aa).

Residues 1–17 (MSESVHTNTSLWSKGMK) are Periplasmic-facing. The helical transmembrane segment at 18-38 (AVIVAQFLSAFGDNALLFATL) threads the bilayer. The Cytoplasmic portion of the chain corresponds to 39 to 52 (ALLKAQFYPEWSQP). The helical transmembrane segment at 53–73 (ILQMVFVGAYILFAPFVGQVA) threads the bilayer. Residues 74-90 (DSFAKGRVMMFANGLKL) are Periplasmic-facing. The helical transmembrane segment at 91 to 111 (LGAASICFGINPFLGYTLVGV) threads the bilayer. The Cytoplasmic segment spans residues 112–144 (GAAAYSPAKYGILGELTTGSKLVKANGLMEAST). A helical membrane pass occupies residues 145 to 165 (IAAILLGSVAGGVLADWHVLV). Position 166 (A166) is a topological domain, periplasmic. Residues 167–187 (LAACALAYGGAVVANIYIPKL) form a helical membrane-spanning segment. Residues 188 to 226 (AAARPGQSWNLINMTRSFLNACTSLWRNGETRFSLVGTS) are Cytoplasmic-facing. The helical transmembrane segment at 227–247 (LFWGAGVTLRFLLVLWVPVAL) threads the bilayer. Over 248–256 (GITDNATPT) the chain is Periplasmic. A helical membrane pass occupies residues 257-277 (YLNAMVAIGIVVGAGAAAKLV). The Cytoplasmic segment spans residues 278 to 280 (TLE). The chain crosses the membrane as a helical span at residues 281-301 (TVSRCMPAGILIGVVVLIFSL). Over 302–304 (QHE) the chain is Periplasmic. The chain crosses the membrane as a helical span at residues 305-325 (LLPAYALLMLIGVLGGFFVVP). Residues 326–343 (LNALLQERGKKSVGAGNA) lie on the Cytoplasmic side of the membrane. A helical transmembrane segment spans residues 344–364 (IAVQNLGENSAMLLMLGIYSL). The Periplasmic portion of the chain corresponds to 365-366 (AV). The chain crosses the membrane as a helical span at residues 367–387 (MVGIPVVPIGIGFGALFALAI). Residues 388 to 397 (TALWIWQRRY) are Cytoplasmic-facing.

Belongs to the major facilitator superfamily. LplT (TC 2.A.1.42) family.

It localises to the cell inner membrane. Its function is as follows. Catalyzes the facilitated diffusion of 2-acyl-glycero-3-phosphoethanolamine (2-acyl-GPE) into the cell. In Escherichia coli O127:H6 (strain E2348/69 / EPEC), this protein is Lysophospholipid transporter LplT.